The sequence spans 208 residues: Inducible T-cell costimulator (208 aa).

A signal peptide spans 1–19 (MKSDLWYFLLFCFQVEALT). Over 20-140 (GEINDSTKSE…YESQTCCQLK (121 aa)) the chain is Extracellular. N-linked (GlcNAc...) asparagine glycosylation occurs at Asn-23. The region spanning 30–132 (MFTFHDGGVQ…ISREYLNVYE (103 aa)) is the Ig-like V-type domain. 2 disulfides stabilise this stretch: Cys-42/Cys-108 and Cys-63/Cys-82. Asn-122 is a glycosylation site (N-linked (GlcNAc...) asparagine). Residues 141 to 161 (FWLPIGCAAFVVVYIFGCIFL) traverse the membrane as a helical segment. The Cytoplasmic portion of the chain corresponds to 162–208 (CWLTKKKYRSSVHDPNSEYMFMAAVNTAKKPGLTGVTHNLELCGTQA).

As to quaternary structure, homodimer; disulfide-linked. Interacts with ICOSLG. Interacts with PIK3R1. Interacts with TBK1; this interaction is critical for the maturation of T follicular regulatory cells. Post-translationally, N-glycosylated.

It is found in the cell membrane. Functionally, stimulatory receptor expressed in activated or antigen-experienced T-cells that plays an important role in the immune response. Upon binding to its ligand ICOSL expressed on antigen presenting cells (APCs), delivers costimulatory signals that enhances all basic T-cell responses to a foreign antigen, namely proliferation, secretion of lymphokines including IL10, up-regulation of molecules that mediate cell-cell interaction, and effective help for antibody secretion by B-cells. Also acts as a costimulatory receptor critical for the differentiation of T follicular regulatory cells upon immune challenges such as viral infection. Mechanistically, potentiates TCR-induced calcium flux by augmenting PLCG1 activation and actin remodeling. In addition, activates PI3K signaling pathways independently of calcium flux. Essential both for efficient interaction between T and B-cells and for normal antibody responses to T-cell dependent antigens. Prevents the apoptosis of pre-activated T-cells. Plays a critical role in CD40-mediated class switching of immunoglobin isotypes. The protein is Inducible T-cell costimulator (ICOS) of Canis lupus familiaris (Dog).